We begin with the raw amino-acid sequence, 469 residues long: ATP synthase subunit beta (469 aa).

Glycine 156–threonine 163 contributes to the ATP binding site.

It belongs to the ATPase alpha/beta chains family. In terms of assembly, F-type ATPases have 2 components, CF(1) - the catalytic core - and CF(0) - the membrane proton channel. CF(1) has five subunits: alpha(3), beta(3), gamma(1), delta(1), epsilon(1). CF(0) has three main subunits: a(1), b(2) and c(9-12). The alpha and beta chains form an alternating ring which encloses part of the gamma chain. CF(1) is attached to CF(0) by a central stalk formed by the gamma and epsilon chains, while a peripheral stalk is formed by the delta and b chains.

The protein resides in the cell membrane. The enzyme catalyses ATP + H2O + 4 H(+)(in) = ADP + phosphate + 5 H(+)(out). Functionally, produces ATP from ADP in the presence of a proton gradient across the membrane. The catalytic sites are hosted primarily by the beta subunits. The polypeptide is ATP synthase subunit beta (Lactococcus lactis subsp. cremoris (strain SK11)).